The chain runs to 413 residues: Multifunctional CCA protein (413 aa).

Positions 8 and 11 each coordinate ATP. Gly8 and Arg11 together coordinate CTP. The Mg(2+) site is built by Asp21 and Asp23. 3 residues coordinate ATP: Arg91, Arg143, and Arg146. CTP is bound by residues Arg91, Arg143, and Arg146. Positions 232 to 333 (TGVHVMMVVD…VRLFERSDAL (102 aa)) constitute an HD domain.

This sequence belongs to the tRNA nucleotidyltransferase/poly(A) polymerase family. Bacterial CCA-adding enzyme type 1 subfamily. In terms of assembly, monomer. Can also form homodimers and oligomers. Mg(2+) is required as a cofactor. Requires Ni(2+) as cofactor.

It catalyses the reaction a tRNA precursor + 2 CTP + ATP = a tRNA with a 3' CCA end + 3 diphosphate. It carries out the reaction a tRNA with a 3' CCA end + 2 CTP + ATP = a tRNA with a 3' CCACCA end + 3 diphosphate. Functionally, catalyzes the addition and repair of the essential 3'-terminal CCA sequence in tRNAs without using a nucleic acid template. Adds these three nucleotides in the order of C, C, and A to the tRNA nucleotide-73, using CTP and ATP as substrates and producing inorganic pyrophosphate. tRNA 3'-terminal CCA addition is required both for tRNA processing and repair. Also involved in tRNA surveillance by mediating tandem CCA addition to generate a CCACCA at the 3' terminus of unstable tRNAs. While stable tRNAs receive only 3'-terminal CCA, unstable tRNAs are marked with CCACCA and rapidly degraded. This is Multifunctional CCA protein from Burkholderia vietnamiensis (strain G4 / LMG 22486) (Burkholderia cepacia (strain R1808)).